The sequence spans 479 residues: Ribulose bisphosphate carboxylase large chain (479 aa).

Positions Met1–Ser2 are excised as a propeptide. Pro3 is subject to N-acetylproline. Substrate-binding positions include Thr65, Asn123, Thr173–Lys177, and Lys201–Glu204. Catalysis depends on Lys175, which acts as the Proton acceptor. Residues Lys201, Asp203, and Glu204 each contribute to the Mg(2+) site. At Lys201 the chain carries N6-carboxylysine. Phosphoserine is present on Ser208. His294 functions as the Proton acceptor in the catalytic mechanism. Residues His294–Arg295 and His327 each bind substrate. Phosphothreonine is present on Thr330. Substrate is bound by residues Lys334 and Ser379–Gly381.

It belongs to the RuBisCO large chain family. Type I subfamily. As to quaternary structure, heterohexadecamer of 8 large chains and 8 small chains; disulfide-linked. The disulfide link is formed within the large subunit homodimers. Interacts with RBCX1 and RBCX1. An intermediate complex made of eight RbcL subunits interacts with the chaperone BSD2. Mg(2+) serves as cofactor. Post-translationally, the disulfide bond which can form in the large chain dimeric partners within the hexadecamer appears to be associated with oxidative stress and protein turnover.

It is found in the plastid. It localises to the chloroplast. It catalyses the reaction 2 (2R)-3-phosphoglycerate + 2 H(+) = D-ribulose 1,5-bisphosphate + CO2 + H2O. The catalysed reaction is D-ribulose 1,5-bisphosphate + O2 = 2-phosphoglycolate + (2R)-3-phosphoglycerate + 2 H(+). RuBisCO catalyzes two reactions: the carboxylation of D-ribulose 1,5-bisphosphate, the primary event in carbon dioxide fixation, as well as the oxidative fragmentation of the pentose substrate in the photorespiration process. Both reactions occur simultaneously and in competition at the same active site. Binds to abscisic acid (ABA). The sequence is that of Ribulose bisphosphate carboxylase large chain from Arabidopsis thaliana (Mouse-ear cress).